Reading from the N-terminus, the 765-residue chain is Putative U-box domain-containing protein 50 (765 aa).

A coiled-coil region spans residues 198-391 (QEIENYFQQL…NRRIEFCKER (194 aa)). The Protein kinase domain occupies 422 to 765 (SDRLRLKSGG…HSKRAAQASS (344 aa)). Residues 428–436 (KSGGNWTNV) and Lys449 each bind ATP. In terms of domain architecture, U-box spans 688-762 (DIPSVFMCPI…QDWHSKRAAQ (75 aa)).

This sequence belongs to the protein kinase superfamily. Ser/Thr protein kinase family.

The enzyme catalyses S-ubiquitinyl-[E2 ubiquitin-conjugating enzyme]-L-cysteine + [acceptor protein]-L-lysine = [E2 ubiquitin-conjugating enzyme]-L-cysteine + N(6)-ubiquitinyl-[acceptor protein]-L-lysine.. It participates in protein modification; protein ubiquitination. In terms of biological role, functions as an E3 ubiquitin ligase. The chain is Putative U-box domain-containing protein 50 (PUB50) from Arabidopsis thaliana (Mouse-ear cress).